A 560-amino-acid chain; its full sequence is Nucleoprotein (560 aa).

The binding site for the cap structure m7GTP stretch occupies residues 53–236 (MRKDKRTDTD…ITQEQSQINV (184 aa)). A disordered region spans residues 333–353 (LTDTGSPNHPPVRNGGSPRLS). Mn(2+)-binding residues include aspartate 379 and glutamate 381. Positions 389, 496, 499, and 520 each coordinate Zn(2+). Residue aspartate 524 coordinates Mn(2+).

This sequence belongs to the arenaviridae nucleocapsid protein family. In terms of assembly, homomultimerizes to form the nucleocapsid. Binds to viral genomic RNA. Interacts with glycoprotein G2. Interacts with protein Z; this interaction probably directs the encapsidated genome to budding sites. Interacts with protein L; this interaction does not interfere with Z-L interaction. Interacts with host IKBKE (via Protein kinase domain); the interaction inhibits IKBKE kinase activity.

Its subcellular location is the virion. The protein resides in the host cytoplasm. Its function is as follows. Encapsidates the genome, protecting it from nucleases. The encapsidated genomic RNA is termed the nucleocapsid (NC). Serves as template for viral transcription and replication. The increased presence of protein N in host cell does not seem to trigger the switch from transcription to replication as observed in other negative strain RNA viruses. Through the interaction with host IKBKE, strongly inhibits the phosphorylation and nuclear translocation of host IRF3, a protein involved in interferon activation pathway, leading to the inhibition of interferon-beta and IRF3-dependent promoters activation. Also encodes a functional 3'-5' exoribonuclease that degrades preferentially dsRNA substrates and thereby participates in the suppression of interferon induction. The polypeptide is Nucleoprotein (Pirital mammarenavirus (isolate Rat/Venezuela/VAV-488/1995) (PIRV)).